The sequence spans 282 residues: MSNKTIGLGSIEIANDKPFVLFGGMNVLESRDLAMKIAETYAETTQKLGIPYVFKASFDKANRSSVNSYRGPGMEEGLKIFEEIKSTFNLPLITDVHEIHQCAPVAEVVDIIQLPAFLARQTDLVVAMAKTGAIINVKKPQFLAPHEMRHIITKFNEAGNDEIILCERGSSFGYNNLVVDMLGMDEMKQTGYPVIFDATHALQRPGGRADSAGGRRAQATELARSGMALGLAGLFIEAHPDPDNAKCDGPCALPLHQLEAYLTQMKAVDDLVKSFDAIDTSK.

Belongs to the KdsA family.

It localises to the cytoplasm. The enzyme catalyses D-arabinose 5-phosphate + phosphoenolpyruvate + H2O = 3-deoxy-alpha-D-manno-2-octulosonate-8-phosphate + phosphate. It functions in the pathway carbohydrate biosynthesis; 3-deoxy-D-manno-octulosonate biosynthesis; 3-deoxy-D-manno-octulosonate from D-ribulose 5-phosphate: step 2/3. The protein operates within bacterial outer membrane biogenesis; lipopolysaccharide biosynthesis. The protein is 2-dehydro-3-deoxyphosphooctonate aldolase of Shewanella woodyi (strain ATCC 51908 / MS32).